A 401-amino-acid polypeptide reads, in one-letter code: Tryptophan synthase beta chain (401 aa).

Lysine 91 is subject to N6-(pyridoxal phosphate)lysine.

The protein belongs to the TrpB family. Tetramer of two alpha and two beta chains. The cofactor is pyridoxal 5'-phosphate.

It carries out the reaction (1S,2R)-1-C-(indol-3-yl)glycerol 3-phosphate + L-serine = D-glyceraldehyde 3-phosphate + L-tryptophan + H2O. It functions in the pathway amino-acid biosynthesis; L-tryptophan biosynthesis; L-tryptophan from chorismate: step 5/5. The beta subunit is responsible for the synthesis of L-tryptophan from indole and L-serine. The polypeptide is Tryptophan synthase beta chain (Lactococcus lactis subsp. cremoris (strain SK11)).